A 597-amino-acid chain; its full sequence is uncharacterized protein (597 aa).

2 disordered regions span residues 165–197 (NSRA…IFSK) and 278–344 (ERSS…RGTL). Residues 169-178 (VPPPAPPNPP) are compositionally biased toward pro residues. Over residues 179-189 (KMEKHMSHDTS) the composition is skewed to basic and acidic residues. The segment covering 293–313 (STEVSITSSSPSPSSSSSTST) has biased composition (low complexity). The region spanning 402–465 (WSLDDVLLWL…LDDLSKIIEN (64 aa)) is the SAM domain. The interval 576-597 (EESQQKESSSSGISSSPQTPTE) is disordered. Low complexity predominate over residues 581–597 (KESSSSGISSSPQTPTE).

This is an uncharacterized protein from Caenorhabditis elegans.